The following is a 666-amino-acid chain: UvrABC system protein B (666 aa).

Residues 25–412 form the Helicase ATP-binding domain; the sequence is EQVQAGAPYQ…EEQIVEQVIR (388 aa). 38 to 45 serves as a coordination point for ATP; it reads GATGTGKT. The short motif at 91–114 is the Beta-hairpin element; the sequence is YYDYYQPEAYIPVTDTYIAKTASI. Residues 429-595 form the Helicase C-terminal domain; that stretch reads QVDDLLAEIQ…PIIKRSSNAI (167 aa). The UVR domain maps to 626–661; the sequence is PNLITQLEAQMKEAAKNLEFEEAAQYRDRIKKLRER.

Belongs to the UvrB family. In terms of assembly, forms a heterotetramer with UvrA during the search for lesions. Interacts with UvrC in an incision complex.

It is found in the cytoplasm. Its function is as follows. The UvrABC repair system catalyzes the recognition and processing of DNA lesions. A damage recognition complex composed of 2 UvrA and 2 UvrB subunits scans DNA for abnormalities. Upon binding of the UvrA(2)B(2) complex to a putative damaged site, the DNA wraps around one UvrB monomer. DNA wrap is dependent on ATP binding by UvrB and probably causes local melting of the DNA helix, facilitating insertion of UvrB beta-hairpin between the DNA strands. Then UvrB probes one DNA strand for the presence of a lesion. If a lesion is found the UvrA subunits dissociate and the UvrB-DNA preincision complex is formed. This complex is subsequently bound by UvrC and the second UvrB is released. If no lesion is found, the DNA wraps around the other UvrB subunit that will check the other stand for damage. This Synechococcus sp. (strain ATCC 27144 / PCC 6301 / SAUG 1402/1) (Anacystis nidulans) protein is UvrABC system protein B.